The following is a 726-amino-acid chain: Catalase-peroxidase (726 aa).

Positions 1–33 (MSTTDDTHNTLSTGKCPFHQGGHDRSAGAGTAS) are disordered. The segment at residues 105–226 (WHGAGTYRSI…LGATEMGLIY (122 aa)) is a cross-link (tryptophyl-tyrosyl-methioninium (Trp-Tyr) (with M-252)). Catalysis depends on His-106, which acts as the Proton acceptor. The tryptophyl-tyrosyl-methioninium (Tyr-Met) (with W-105) cross-link spans 226-252 (YVNPEGPDHSGEPLSAAAAIRATFGNM). His-267 is a binding site for heme b.

This sequence belongs to the peroxidase family. Peroxidase/catalase subfamily. As to quaternary structure, homodimer or homotetramer. The cofactor is heme b. In terms of processing, formation of the three residue Trp-Tyr-Met cross-link is important for the catalase, but not the peroxidase activity of the enzyme.

The enzyme catalyses H2O2 + AH2 = A + 2 H2O. It catalyses the reaction 2 H2O2 = O2 + 2 H2O. Bifunctional enzyme with both catalase and broad-spectrum peroxidase activity. In Salmonella schwarzengrund (strain CVM19633), this protein is Catalase-peroxidase.